Reading from the N-terminus, the 1005-residue chain is DNA polymerase (1005 aa).

Belongs to the DNA polymerase type-B family. Interacts with OPG148. Component of the Uracil-DNA glycosylase(UDG)-OPG148-polymerase complex; OPG148 and OPG116/UDG form a heterodimeric processivity factor that associates with OPG071 to form the processive polymerase holoenzyme.

It carries out the reaction DNA(n) + a 2'-deoxyribonucleoside 5'-triphosphate = DNA(n+1) + diphosphate. Functionally, catalyzes DNA synthesis. Acquires processivity by associating with a heterodimeric processivity factor comprised of the viral OPG148 and OPG116 proteins, thereby forming the DNA polymerase holoenzyme. Displays 3'- to 5' exonuclease activity. Might participate in viral DNA recombination. Does not perform OPG116/D4synthesis across an abasic site. The polypeptide is DNA polymerase (OPG071) (Variola virus (isolate Human/India/Ind3/1967) (VARV)).